The sequence spans 153 residues: Carbohydrate-binding protein AWN (153 aa).

The signal sequence occupies residues 1 to 20; the sequence is MKLAAPSLALLLSTATLVSG. Residue Ala-21 is modified to N-acetylalanine. Disulfide bonds link Cys-29–Cys-50 and Cys-73–Cys-94. One can recognise a CUB domain in the interval 29-130; it reads CGGVLRDPPG…SPFHIYYYAD (102 aa). The tract at residues 93-130 is heparin-binding; that stretch reads ICGGISLVFRSSSNIATIKYLRTSGQRASPFHIYYYAD.

The protein belongs to the spermadhesin family. In terms of processing, partial N-acetylation differentiates isoforms AWN-1 (not acetylated) and AWN-2 (acetylated).

Its subcellular location is the secreted. In terms of biological role, AWN proteins mediate the binding of boar spermatozoa to component(s) of the egg's zona pellucida by a carbohydrate-binding mechanism. Awn proteins are secretory components of the male accessory glands being coated to the sperm surface at the time of ejaculation. They possess as well heparin-, serine-protease-inhibitor-binding capability. The polypeptide is Carbohydrate-binding protein AWN (Sus scrofa (Pig)).